Here is a 298-residue protein sequence, read N- to C-terminus: Calcium-binding protein 1 (298 aa).

Basic and acidic residues predominate over residues 1 to 10; sequence MSSHIAKSES. Residues 1-131 form a disordered region; it reads MSSHIAKSES…APAGTPEADP (131 aa). Serine 2 is lipidated: N-myristoyl glycine. A lipid anchor (S-palmitoyl cysteine) is attached at histidine 4. Residues 11 to 25 show a composition bias toward low complexity; it reads KTSLLKAAAASGGSR. 4 consecutive EF-hand domains span residues 153–188, 207–224, 230–265, and 267–298; these read EEIEELREAFREFDKDKDGYINCRDLGNCMRTMGYM, GHVDFDDFVELMGPKLLA, IGVKELRDAFREFDTNGDGEISTSELREAMRKLLGH, and VGHRDIEEIIRDVDLNGDGRVDFEEFVRMMSR. The Ca(2+) site is built by aspartate 166, aspartate 168, aspartate 170, tyrosine 172, and aspartate 177. Residues aspartate 243, asparagine 245, aspartate 247, and glutamate 249 each contribute to the Ca(2+) site. The residue at position 251 (serine 251) is a Phosphoserine. Ca(2+) contacts are provided by glutamate 254, aspartate 280, asparagine 282, aspartate 284, arginine 286, and glutamate 291.

As to quaternary structure, interacts with ITPR1, ITPR2 and ITPR3. The strength of this interaction inversely correlates with calcium concentration. Interacts with CACNA1A (via C-terminal CDB motif) in the pre- and postsynaptic membranes. Interacts with CACNA1C. Interacts with CACNA1D. Interacts (via EF-hands 1 and 2) at microtubules with MAP1LC3B. Interacts (via EF-hands 1 and 2) with NSMF (via the central NLS-containing motif region), the interaction occurs in a calcium dependent manner after synaptic NMDA receptor stimulation and prevents nuclear import of NSMF. Interacts with MYO1C and TRPC5. Interacts with SPACA9. In terms of processing, phosphorylated. The phosphorylation regulates the activity. Somatodendritic compartment of neurons. Restricted expression in retina to a subpopulation of amacrine, bipolar, and ganglion cells. According to PubMed:11906216, expression is heterogeneous within brain regions and their major cell types and does not match with those of marker proteins for characterized neuronal subpopulations. Isoform 2: Minor isoform expressed in the brain, in the granule cell layer of the cerebellum, at low level. Not developmentally regulated. Isoform 3: Minor isoform expressed in the brain, in the granule cell layer. of the cerebellum, at low level. Not developmentally regulated.

It is found in the cytoplasm. The protein localises to the cytoskeleton. Its function is as follows. Modulates calcium-dependent activity of inositol 1,4,5-triphosphate receptors (ITPRs). Inhibits agonist-induced intracellular calcium signaling. Enhances inactivation and does not support calcium-dependent facilitation of voltage-dependent P/Q-type calcium channels. Causes calcium-dependent facilitation and inhibits inactivation of L-type calcium channels by binding to the same sites as calmodulin in the C-terminal domain of CACNA1C, but has an opposite effect on channel function. Suppresses the calcium-dependent inactivation of CACNA1D. Inhibits TRPC5 channels. Prevents NMDA receptor-induced cellular degeneration. Required for the normal transfer of light signals through the retina. The polypeptide is Calcium-binding protein 1 (Cabp1) (Rattus norvegicus (Rat)).